A 902-amino-acid polypeptide reads, in one-letter code: Ribonuclease E (902 aa).

Positions 39–119 (SNIYKGKITR…GTKGAALTTF (81 aa)) constitute an S1 motif domain. Mg(2+) contacts are provided by Asp303 and Asp346. Residues Cys404 and Cys407 each coordinate Zn(2+). The required for zinc-mediated homotetramerization and catalytic activity stretch occupies residues 404-407 (CPRC). A disordered region spans residues 881 to 902 (GKNSAGVHSATNFSNSPVSKLK). The span at 889-902 (SATNFSNSPVSKLK) shows a compositional bias: polar residues.

This sequence belongs to the RNase E/G family. RNase E subfamily. In terms of assembly, component of the RNA degradosome, which is a multiprotein complex involved in RNA processing and mRNA degradation. Within the RNA degradosome, RNase E assembles into a homotetramer formed by a dimer of dimers. Zn(2+) serves as cofactor. Requires Mg(2+) as cofactor.

It localises to the cytoplasm. The protein resides in the cell inner membrane. It carries out the reaction Endonucleolytic cleavage of single-stranded RNA in A- and U-rich regions.. Endoribonuclease that plays a central role in RNA processing and decay. Required for the maturation of 5S and 16S rRNAs and the majority of tRNAs. Also involved in the degradation of most mRNAs. This chain is Ribonuclease E, found in Buchnera aphidicola subsp. Acyrthosiphon pisum (strain APS) (Acyrthosiphon pisum symbiotic bacterium).